The sequence spans 301 residues: Zinc finger protein 346 (301 aa).

Matrin-type zinc fingers lie at residues 55–85 (SQCKVCSAVLISESQKLAHYQSKKHASKVRR) and 117–141 (KACSVCNMTFSSPVVAQSHYQGKVH). Zn(2+) contacts are provided by C57, C60, H73, H79, C119, C122, H135, and H141. A disordered region spans residues 151–177 (GSQTPALPQPEAQAKKDDGMQGPAEQD). Matrin-type zinc fingers lie at residues 180–210 (RFCSICQASFNNPLMAQQHYSGKKHKKHMNK) and 230–257 (YPCTVCNIELNSVEQYQAHISGSKHKNH). The tract at residues 250–283 (SGSKHKNHAKPKKGPNAFAPPPDNYQPDYQYPTN) is disordered. The span at 251–262 (GSKHKNHAKPKK) shows a compositional bias: basic residues.

It localises to the nucleus. The protein resides in the cytoplasm. Functionally, binds preferentially to dsRNA, but also to RNA-DNA hybrids. The sequence is that of Zinc finger protein 346 from Danio rerio (Zebrafish).